A 167-amino-acid chain; its full sequence is Ribosome rescue factor SmrB (167 aa).

Residues leucine 91–aspartate 166 enclose the Smr domain.

The protein belongs to the SmrB family. In terms of assembly, associates with collided ribosomes, but not with correctly translating polysomes.

Functionally, acts as a ribosome collision sensor. Detects stalled/collided disomes (pairs of ribosomes where the leading ribosome is stalled and a second ribosome has collided with it) and endonucleolytically cleaves mRNA at the 5' boundary of the stalled ribosome. Stalled/collided disomes form a new interface (primarily via the 30S subunits) that binds SmrB. Cleaved mRNA becomes available for tmRNA ligation, leading to ribosomal subunit dissociation and rescue of stalled ribosomes. The polypeptide is Ribosome rescue factor SmrB (Haemophilus influenzae (strain ATCC 51907 / DSM 11121 / KW20 / Rd)).